A 276-amino-acid chain; its full sequence is Probable endonuclease 4 (276 aa).

Residues histidine 65, histidine 105, glutamate 141, aspartate 175, histidine 178, histidine 210, aspartate 223, histidine 225, and glutamate 255 each coordinate Zn(2+).

Belongs to the AP endonuclease 2 family. Zn(2+) serves as cofactor.

It carries out the reaction Endonucleolytic cleavage to 5'-phosphooligonucleotide end-products.. In terms of biological role, endonuclease IV plays a role in DNA repair. It cleaves phosphodiester bonds at apurinic or apyrimidinic (AP) sites, generating a 3'-hydroxyl group and a 5'-terminal sugar phosphate. This chain is Probable endonuclease 4, found in Symbiobacterium thermophilum (strain DSM 24528 / JCM 14929 / IAM 14863 / T).